We begin with the raw amino-acid sequence, 427 residues long: Serine--tRNA ligase (427 aa).

236–238 (TAE) lines the L-serine pocket. 267–269 (RSE) is an ATP binding site. E290 is a binding site for L-serine. 354–357 (EISS) contacts ATP. Position 388 (S388) interacts with L-serine.

This sequence belongs to the class-II aminoacyl-tRNA synthetase family. Type-1 seryl-tRNA synthetase subfamily. Homodimer. The tRNA molecule binds across the dimer.

It localises to the cytoplasm. It carries out the reaction tRNA(Ser) + L-serine + ATP = L-seryl-tRNA(Ser) + AMP + diphosphate + H(+). It catalyses the reaction tRNA(Sec) + L-serine + ATP = L-seryl-tRNA(Sec) + AMP + diphosphate + H(+). The protein operates within aminoacyl-tRNA biosynthesis; selenocysteinyl-tRNA(Sec) biosynthesis; L-seryl-tRNA(Sec) from L-serine and tRNA(Sec): step 1/1. Catalyzes the attachment of serine to tRNA(Ser). Is also able to aminoacylate tRNA(Sec) with serine, to form the misacylated tRNA L-seryl-tRNA(Sec), which will be further converted into selenocysteinyl-tRNA(Sec). This Psychrobacter arcticus (strain DSM 17307 / VKM B-2377 / 273-4) protein is Serine--tRNA ligase.